Consider the following 33-residue polypeptide: Cytochrome b6-f complex subunit 8 (33 aa).

Residues 2-22 (LFTLAWASLAAVFSFSIAMVV) form a helical membrane-spanning segment.

This sequence belongs to the PetN family. In terms of assembly, the 4 large subunits of the cytochrome b6-f complex are cytochrome b6, subunit IV (17 kDa polypeptide, PetD), cytochrome f and the Rieske protein, while the 4 small subunits are PetG, PetL, PetM and PetN. The complex functions as a dimer.

The protein localises to the cellular thylakoid membrane. Functionally, component of the cytochrome b6-f complex, which mediates electron transfer between photosystem II (PSII) and photosystem I (PSI), cyclic electron flow around PSI, and state transitions. In Prochlorococcus marinus (strain MIT 9303), this protein is Cytochrome b6-f complex subunit 8.